Reading from the N-terminus, the 306-residue chain is Ribonuclease Z (306 aa).

Residues His-63, His-65, Asp-67, His-68, His-141, Asp-208, and His-266 each contribute to the Zn(2+) site. Asp-67 (proton acceptor) is an active-site residue.

Belongs to the RNase Z family. In terms of assembly, homodimer. It depends on Zn(2+) as a cofactor.

It carries out the reaction Endonucleolytic cleavage of RNA, removing extra 3' nucleotides from tRNA precursor, generating 3' termini of tRNAs. A 3'-hydroxy group is left at the tRNA terminus and a 5'-phosphoryl group is left at the trailer molecule.. In terms of biological role, zinc phosphodiesterase, which displays some tRNA 3'-processing endonuclease activity. Probably involved in tRNA maturation, by removing a 3'-trailer from precursor tRNA. The protein is Ribonuclease Z of Chlamydia caviae (strain ATCC VR-813 / DSM 19441 / 03DC25 / GPIC) (Chlamydophila caviae).